Reading from the N-terminus, the 120-residue chain is Large ribosomal subunit protein bL19 (120 aa).

It belongs to the bacterial ribosomal protein bL19 family.

Its function is as follows. This protein is located at the 30S-50S ribosomal subunit interface and may play a role in the structure and function of the aminoacyl-tRNA binding site. In Chlorobium phaeobacteroides (strain DSM 266 / SMG 266 / 2430), this protein is Large ribosomal subunit protein bL19.